The following is a 264-amino-acid chain: Undecaprenyl-diphosphatase 2 (264 aa).

7 consecutive transmembrane segments (helical) span residues 29–49 (GSAFSAAMQLAALAAVISYFW), 77–97 (SWIVLATIPIVIAGVALSGVL), 107–127 (LTVIGWSCIAMAILLALAEIF), 137–157 (ASLADALLVGVAQIGALIPGV), 180–200 (FSFLLGLPAIALAGLKELWEL), 212–232 (VLATGLVVASISAFFAIWGLM), and 243–263 (FVIYRGLLGVVLLLGLAMGWL).

Belongs to the UppP family.

Its subcellular location is the cell inner membrane. It catalyses the reaction di-trans,octa-cis-undecaprenyl diphosphate + H2O = di-trans,octa-cis-undecaprenyl phosphate + phosphate + H(+). Functionally, catalyzes the dephosphorylation of undecaprenyl diphosphate (UPP). Confers resistance to bacitracin. This chain is Undecaprenyl-diphosphatase 2, found in Mesorhizobium japonicum (strain LMG 29417 / CECT 9101 / MAFF 303099) (Mesorhizobium loti (strain MAFF 303099)).